A 376-amino-acid polypeptide reads, in one-letter code: Heat stress transcription factor A-2a (376 aa).

Positions 137-168 (LKTIKRRRPPPSSPPSSSSSSSSSQHQQQPAA) are disordered. Over residues 151–160 (PSSSSSSSSS) the composition is skewed to low complexity. Residues 182–229 (VNRLQRDKSVLIAEVVKLRQEQQTTRAQMQAMEERISAAEQKQQQMTV) adopt a coiled-coil conformation. The hydrophobic repeat HR-A/B stretch occupies residues 185–235 (LQRDKSVLIAEVVKLRQEQQTTRAQMQAMEERISAAEQKQQQMTVFLARAM). Positions 265 to 269 (KKRRR) match the Nuclear localization signal motif. Disordered regions lie at residues 296–319 (VAEPDGDTTPRGDGGGGGGGDTES) and 332–362 (KQREDGVAGGVQESNSGGADVDNDEEDDDDD). Over residues 307–316 (GDGGGGGGGD) the composition is skewed to gly residues. An AHA motif is present at residues 318–325 (ESFWMQLL). The segment covering 352-362 (VDNDEEDDDDD) has biased composition (acidic residues). A Nuclear export signal motif is present at residues 366–373 (LVQSIYHL).

This sequence belongs to the HSF family. Class A subfamily. Homotrimer. Exhibits temperature-dependent phosphorylation.

The protein resides in the cytoplasm. The protein localises to the nucleus. Its function is as follows. Transcriptional regulator that specifically binds DNA of heat shock promoter elements (HSE). This Oryza sativa subsp. japonica (Rice) protein is Heat stress transcription factor A-2a (HSFA2A).